The primary structure comprises 91 residues: MEIMDEIKVNLQKEVSLEEAERYAKNIASKYGDGILLSVHDSKTGYRAPEVYCCGEKPWEVYACNRGANLKISVNQFEFYFRIEVEGQAKY.

This is an uncharacterized protein from Archaeoglobus fulgidus (strain ATCC 49558 / DSM 4304 / JCM 9628 / NBRC 100126 / VC-16).